The primary structure comprises 236 residues: Large ribosomal subunit protein uL1 (236 aa).

This sequence belongs to the universal ribosomal protein uL1 family. Part of the 50S ribosomal subunit.

Functionally, binds directly to 23S rRNA. The L1 stalk is quite mobile in the ribosome, and is involved in E site tRNA release. In terms of biological role, protein L1 is also a translational repressor protein, it controls the translation of the L11 operon by binding to its mRNA. The sequence is that of Large ribosomal subunit protein uL1 from Protochlamydia amoebophila (strain UWE25).